Here is a 534-residue protein sequence, read N- to C-terminus: MASRDLPHSLNDLAFGWIKHLKEEIIINKNSQQLVDEDFQPDEDVTKETKVKLNNLWPAFASGAGLFADGYVNNSIGIVMACLKILYGDEFTKSNAISNIGSIGFVGTVVGQLSFGYISDRVARKGGMMTANIMLIAFTLLCAVGSWGTTIQGFFACLTVWRFCLGVAIGAEYPTSSVIASEFANQLPAGKRNRYFIWFTGFMIDFGFVVSAFVPFVLLWIFTEKHLRALWRVSIGLGAILPTALFFIRLKMKDSTSFEKLHMKNVRYRDYPWWLIVKFYWFRLTIVSMIWFIYNFSVYSFGTFNAIILGQIIPDAPLWQQWGWSVVFNLFYIPGSFLGAFSADYLGPRLTLAIGVGLQGIIGFIMSACLNGLRKQVAAFTVVFGIFATLGEFGPGGNIGLLASKTSATPIRGQYYGIAAAMGKIGAFVGTWIFPAIQRRYASKTNPDLELQVPFYLSSGLCIFSALLTFFLCPHVGQDAINREDKEFVEYLRKNGFDVSKLGEDSSSVDVDVVKDTDSAEKISETIEVGQKLA.

12 consecutive transmembrane segments (helical) span residues 63–83 (GAGL…MACL), 96–116 (AISN…LSFG), 135–155 (LIAF…QGFF), 163–183 (FCLG…ASEF), 202–222 (FMID…LWIF), 230–250 (LWRV…FIRL), 289–309 (MIWF…AIIL), 322–342 (WGWS…GAFS), 350–370 (LTLA…SACL), 377–397 (VAAF…GPGG), 417–437 (GIAA…FPAI), and 453–473 (VPFY…FFLC).

Belongs to the major facilitator superfamily. Sugar transporter (TC 2.A.1.1) family.

Its subcellular location is the cell membrane. Its function is as follows. Probable glycerophosphodiester transporter. Does not possess detectable glycerophosphoinositol (GroPIns) transport activity. Might be involved in the uptake of glycerophosphocholine (GroPCho). The expanded ability to utilize GroPIns and GroPCho results from the organism's pathogenic nature and its need to occupy a variety of environments within its host organism. This possibility is buttressed by the fact that GroPIns and GroPCho are present and abundant in human fluids. The polypeptide is Glycerophosphodiester transporter GIT2 (Candida albicans (strain SC5314 / ATCC MYA-2876) (Yeast)).